The chain runs to 220 residues: Large ribosomal subunit protein uL3 (220 aa).

The disordered stretch occupies residues Ser-132 to Gln-153. Residues Gly-133–Val-145 show a composition bias toward polar residues. Position 153 is an N5-methylglutamine (Gln-153).

Belongs to the universal ribosomal protein uL3 family. In terms of assembly, part of the 50S ribosomal subunit. Forms a cluster with proteins L14 and L19. In terms of processing, methylated by PrmB.

In terms of biological role, one of the primary rRNA binding proteins, it binds directly near the 3'-end of the 23S rRNA, where it nucleates assembly of the 50S subunit. The protein is Large ribosomal subunit protein uL3 of Ralstonia nicotianae (strain ATCC BAA-1114 / GMI1000) (Ralstonia solanacearum).